We begin with the raw amino-acid sequence, 614 residues long: MSNLHSSLNGSASNLPDGSGRSFTASYSGQSGAPSPSFHHTGNLQGLHNIHGNYNVGNMQGTLTSRNSSMNSIPSAGVQQPNGSFSSGRFASNNLPVNLSQLSHGSSHGHSGIPNRGLNVVGNPGFSSNANGVGGSIPGILSTSAGLSNRNSVPGMGISQLLGNSGPRITNSMGNMVGGGNLGRNISSGGLSIPGLSSRLNLAANSGSGLNVQGQNRMMGGVLPQGSQVMSMLGNSYHTGGGPLSQNHVQSVNNMMLSDHPNDSSLFDINNDFPQLTSRPGSAGGTQGHLGSLRKQGLGVPLVQQNQEFSIQNEDFPALPGYKGGNSEYPMDLHQKEQLHDNAMSMMHSQNFSMGRSGGFNLGATYSSHRPQQQPQHTSSTGGLQGLGLRPLSSPNAVSSIGYDQLIQQYQQHQNQSQFPVQQMSSINQFRDSEMKSTQSEADPFCLLGLLDVLNRSNPELTSLALGIDLTTLGLDLNSTGNLYKTFASPWTNEPAKSEVEFTVPNCYYATEPPPLTRASFKRFSYELLFYTFYSMPKDEAQLYAADELYERGWFYHKELRVWFFRVGEPLVRAATYERGTYEYLDPNSFKTVRKEHFVIKYELMEKRPSLLQL.

Disordered regions lie at residues 1–46 (MSNL…NLQG), 58–89 (NMQGTLTSRNSSMNSIPSAGVQQPNGSFSSGR), and 361–391 (NLGATYSSHRPQQQPQHTSSTGGLQGLGLRP). Over residues 364–381 (ATYSSHRPQQQPQHTSST) the composition is skewed to polar residues.

Belongs to the CNOT2/3/5 family. As to quaternary structure, interacts with Agrobacterium tumefaciens VirE2. Binds to VIP1. Forms a complex made of Agrobacterium VirE2, VIP1, VIP2 and single-stranded DNA (ssDNA).

Its subcellular location is the nucleus. Transcriptional regulator required for Agrobacterium-mediated stable genetic transformation by T-DNA integration in host genome, but not for T-DNA transient expression. The protein is Probable NOT transcription complex subunit VIP2 (VIP2) of Arabidopsis thaliana (Mouse-ear cress).